Reading from the N-terminus, the 525-residue chain is Bifunctional purine biosynthesis protein PurH (525 aa).

One can recognise an MGS-like domain in the interval 1–149; the sequence is MSDPVIKRAL…KNHESVTVIT (149 aa).

The protein belongs to the PurH family.

The enzyme catalyses (6R)-10-formyltetrahydrofolate + 5-amino-1-(5-phospho-beta-D-ribosyl)imidazole-4-carboxamide = 5-formamido-1-(5-phospho-D-ribosyl)imidazole-4-carboxamide + (6S)-5,6,7,8-tetrahydrofolate. The catalysed reaction is IMP + H2O = 5-formamido-1-(5-phospho-D-ribosyl)imidazole-4-carboxamide. It functions in the pathway purine metabolism; IMP biosynthesis via de novo pathway; 5-formamido-1-(5-phospho-D-ribosyl)imidazole-4-carboxamide from 5-amino-1-(5-phospho-D-ribosyl)imidazole-4-carboxamide (10-formyl THF route): step 1/1. It participates in purine metabolism; IMP biosynthesis via de novo pathway; IMP from 5-formamido-1-(5-phospho-D-ribosyl)imidazole-4-carboxamide: step 1/1. The sequence is that of Bifunctional purine biosynthesis protein PurH from Chlorobium phaeobacteroides (strain BS1).